The chain runs to 192 residues: Fe/S biogenesis protein NfuA (192 aa).

Positions 149 and 152 each coordinate [4Fe-4S] cluster.

Belongs to the NfuA family. Homodimer. It depends on [4Fe-4S] cluster as a cofactor.

Functionally, involved in iron-sulfur cluster biogenesis. Binds a 4Fe-4S cluster, can transfer this cluster to apoproteins, and thereby intervenes in the maturation of Fe/S proteins. Could also act as a scaffold/chaperone for damaged Fe/S proteins. This is Fe/S biogenesis protein NfuA from Shewanella piezotolerans (strain WP3 / JCM 13877).